The primary structure comprises 411 residues: Carbohydrate sulfotransferase 5 (411 aa).

Over methionine 1 to lysine 30 the chain is Cytoplasmic. A helical; Signal-anchor for type II membrane protein transmembrane segment spans residues threonine 31 to isoleucine 48. Residues serine 49–aspartate 411 are Lumenal-facing. Tryptophan 71–phenylalanine 77 is a binding site for 3'-phosphoadenylyl sulfate. N-linked (GlcNAc...) asparagine glycosylation is present at asparagine 138. Arginine 224–serine 232 lines the 3'-phosphoadenylyl sulfate pocket. N-linked (GlcNAc...) asparagine glycosylation is found at asparagine 327 and asparagine 350.

This sequence belongs to the sulfotransferase 1 family. Gal/GlcNAc/GalNAc subfamily. Predominantly expressed in small and large intestines and colon. Weakly expressed in lymphocytes. Not expressed in other tissues. Down-regulated in colonic adenocarcinomas.

The protein resides in the golgi apparatus membrane. Its function is as follows. Sulfotransferase that utilizes 3'-phospho-5'-adenylyl sulfate (PAPS) as sulfonate donor to catalyze the transfer of sulfate to position 6 of non-reducing N-acetylglucosamine (GlcNAc) residues and O-linked sugars of mucin-type acceptors. Acts on the non-reducing terminal GlcNAc of short carbohydrate substrates. However, it does not transfer sulfate to longer carbohydrate substrates that have poly-N-acetyllactosamine structures. Has no activity toward keratan. Not involved in generating HEV-expressed ligands for SELL. Its substrate specificity may be influenced by its subcellular location. This is Carbohydrate sulfotransferase 5 (CHST5) from Homo sapiens (Human).